The sequence spans 355 residues: S-adenosylmethionine:tRNA ribosyltransferase-isomerase (355 aa).

Belongs to the QueA family. As to quaternary structure, monomer.

It is found in the cytoplasm. The catalysed reaction is 7-aminomethyl-7-carbaguanosine(34) in tRNA + S-adenosyl-L-methionine = epoxyqueuosine(34) in tRNA + adenine + L-methionine + 2 H(+). It functions in the pathway tRNA modification; tRNA-queuosine biosynthesis. In terms of biological role, transfers and isomerizes the ribose moiety from AdoMet to the 7-aminomethyl group of 7-deazaguanine (preQ1-tRNA) to give epoxyqueuosine (oQ-tRNA). The polypeptide is S-adenosylmethionine:tRNA ribosyltransferase-isomerase (Burkholderia cenocepacia (strain ATCC BAA-245 / DSM 16553 / LMG 16656 / NCTC 13227 / J2315 / CF5610) (Burkholderia cepacia (strain J2315))).